The chain runs to 363 residues: UDP-N-acetylglucosamine--N-acetylmuramyl-(pentapeptide) pyrophosphoryl-undecaprenol N-acetylglucosamine transferase (363 aa).

UDP-N-acetyl-alpha-D-glucosamine is bound by residues 10–12, Asn-124, Ser-195, Ile-250, and Gln-295; that span reads TGG.

This sequence belongs to the glycosyltransferase 28 family. MurG subfamily.

It is found in the cell membrane. The catalysed reaction is Mur2Ac(oyl-L-Ala-gamma-D-Glu-L-Lys-D-Ala-D-Ala)-di-trans,octa-cis-undecaprenyl diphosphate + UDP-N-acetyl-alpha-D-glucosamine = beta-D-GlcNAc-(1-&gt;4)-Mur2Ac(oyl-L-Ala-gamma-D-Glu-L-Lys-D-Ala-D-Ala)-di-trans,octa-cis-undecaprenyl diphosphate + UDP + H(+). It participates in cell wall biogenesis; peptidoglycan biosynthesis. Its function is as follows. Cell wall formation. Catalyzes the transfer of a GlcNAc subunit on undecaprenyl-pyrophosphoryl-MurNAc-pentapeptide (lipid intermediate I) to form undecaprenyl-pyrophosphoryl-MurNAc-(pentapeptide)GlcNAc (lipid intermediate II). In Lactiplantibacillus plantarum (strain ATCC BAA-793 / NCIMB 8826 / WCFS1) (Lactobacillus plantarum), this protein is UDP-N-acetylglucosamine--N-acetylmuramyl-(pentapeptide) pyrophosphoryl-undecaprenol N-acetylglucosamine transferase.